A 407-amino-acid polypeptide reads, in one-letter code: Serine hydroxymethyltransferase (407 aa).

(6S)-5,6,7,8-tetrahydrofolate contacts are provided by residues leucine 120 and 124-126; that span reads GHL. Lysine 229 is subject to N6-(pyridoxal phosphate)lysine.

This sequence belongs to the SHMT family. Homodimer. Requires pyridoxal 5'-phosphate as cofactor.

It is found in the cytoplasm. The catalysed reaction is (6R)-5,10-methylene-5,6,7,8-tetrahydrofolate + glycine + H2O = (6S)-5,6,7,8-tetrahydrofolate + L-serine. Its pathway is one-carbon metabolism; tetrahydrofolate interconversion. The protein operates within amino-acid biosynthesis; glycine biosynthesis; glycine from L-serine: step 1/1. Its function is as follows. Catalyzes the reversible interconversion of serine and glycine with tetrahydrofolate (THF) serving as the one-carbon carrier. This reaction serves as the major source of one-carbon groups required for the biosynthesis of purines, thymidylate, methionine, and other important biomolecules. Also exhibits THF-independent aldolase activity toward beta-hydroxyamino acids, producing glycine and aldehydes, via a retro-aldol mechanism. The protein is Serine hydroxymethyltransferase of Deinococcus deserti (strain DSM 17065 / CIP 109153 / LMG 22923 / VCD115).